Reading from the N-terminus, the 311-residue chain is HPr kinase/phosphorylase (311 aa).

Active-site residues include H139 and K160. 154–161 (GESGVGKS) provides a ligand contact to ATP. S161 lines the Mg(2+) pocket. The active-site Proton acceptor; for phosphorylation activity. Proton donor; for dephosphorylation activity is the D178. The segment at 202–211 (IEIRGIGILD) is important for the catalytic mechanism of both phosphorylation and dephosphorylation. Mg(2+) is bound at residue E203. Residue R244 is part of the active site. Positions 265–270 (PVRPGR) are important for the catalytic mechanism of dephosphorylation.

Belongs to the HPrK/P family. As to quaternary structure, homohexamer. It depends on Mg(2+) as a cofactor.

The enzyme catalyses [HPr protein]-L-serine + ATP = [HPr protein]-O-phospho-L-serine + ADP + H(+). It catalyses the reaction [HPr protein]-O-phospho-L-serine + phosphate + H(+) = [HPr protein]-L-serine + diphosphate. Its function is as follows. Catalyzes the ATP- as well as the pyrophosphate-dependent phosphorylation of a specific serine residue in HPr, a phosphocarrier protein of the phosphoenolpyruvate-dependent sugar phosphotransferase system (PTS). HprK/P also catalyzes the pyrophosphate-producing, inorganic phosphate-dependent dephosphorylation (phosphorolysis) of seryl-phosphorylated HPr (P-Ser-HPr). The two antagonistic activities of HprK/P are regulated by several intracellular metabolites, which change their concentration in response to the absence or presence of rapidly metabolisable carbon sources (glucose, fructose, etc.) in the growth medium. Therefore, by controlling the phosphorylation state of HPr, HPrK/P is a sensor enzyme that plays a major role in the regulation of carbon metabolism and sugar transport: it mediates carbon catabolite repression (CCR), and regulates PTS-catalyzed carbohydrate uptake and inducer exclusion. The protein is HPr kinase/phosphorylase of Caldicellulosiruptor bescii (strain ATCC BAA-1888 / DSM 6725 / KCTC 15123 / Z-1320) (Anaerocellum thermophilum).